Consider the following 2187-residue polypeptide: Non-reducing polyketide synthase phnA (2187 aa).

Positions 17 to 255 (LLFGDLSLAH…KYLDIDSPYH (239 aa)) are N-terminal acylcarrier protein transacylase domain (SAT). One can recognise a Ketosynthase family 3 (KS3) domain in the interval 383–819 (HSKIAIVGYS…GGNTAMLIED (437 aa)). Active-site for beta-ketoacyl synthase activity residues include Cys-555, His-690, and His-735. Residues 926-1226 (RVAFAFTGQG…GMVKGTIDSR (301 aa)) form a malonyl-CoA:ACP transacylase (MAT) domain region. Ser-1021 functions as the For acyl/malonyl transferase activity in the catalytic mechanism. The interval 1321-1637 (PCAQQIVEEF…PRRALDHLLP (317 aa)) is product template (PT) domain. The interval 1324 to 1458 (QQIVEEFHDS…LDVVLYPGQQ (135 aa)) is N-terminal hotdog fold. The region spanning 1324-1633 (QQIVEEFHDS…FQGVPRRALD (310 aa)) is the PKS/mFAS DH domain. The active-site Proton acceptor; for dehydratase activity is His-1356. The tract at residues 1486–1633 (TETHLIKRGM…FQGVPRRALD (148 aa)) is C-terminal hotdog fold. The Proton donor; for dehydratase activity role is filled by Asp-1546. Low complexity predominate over residues 1652-1669 (KAPVAAVAPPRTPTKAAP). Residues 1652–1681 (KAPVAAVAPPRTPTKAAPQSRQAAPKQKRS) are disordered. 2 Carrier domains span residues 1684 to 1758 (SDVF…SNSD) and 1796 to 1874 (SSES…YNVM). Ser-1718 bears the O-(pantetheine 4'-phosphoryl)serine mark. A disordered region spans residues 1754 to 1796 (LSNSDEDDTPSGDSSTYEDSESQITSPASSVGPETPGGGEFGS). Acidic residues predominate over residues 1757–1774 (SDEDDTPSGDSSTYEDSE). Ser-1834 carries the O-(pantetheine 4'-phosphoryl)serine modification. Residues 1906-2183 (SSLPQATSIL…PEMGEAVAEF (278 aa)) are thioesterase (TE) domain. The For thioesterase activity role is filled by Ser-2009.

It carries out the reaction 6 malonyl-CoA + acetyl-CoA + 5 H(+) = 3,6,7,9-tetrahydroxy-3-methyl-2,3-dihydro-1H-naphtho[2,1-b]pyran-1-one + 6 CO2 + 7 CoA + H2O. The protein operates within secondary metabolite biosynthesis. Functionally, non-reducing polyketide synthase; part of the gene cluster that mediates the biosynthesis of phenalenones such as herqueinone, compounds that have been reported to treat tumors, bacterial infections and/or mycoses, and rheumatic diseases. The non-reducing polyketide synthase phnA synthesizes the heptaketide backbone and cyclizes it into the angular, hemiketal-containing naphtho-gamma-pyrone prephenalenone. The product template (PT) domain of phnA catalyzes only the C4-C9 aldol condensation, which is unprecedented among known PT domains. The transformation of prephenalenone to phenalenones requires an FAD-dependent monooxygenase phnB, which catalyzes the C2 aromatic hydroxylation of prephenalenone and ring opening of the gamma-pyrone ring simultaneously. Subsequent intramolecular deprotonation of C3 phenolic oxygen accelerates phenalenone ring closure to yield the tricyclic phenalenone core with a C2 hydroxylation. The prenyltransferase phnF further catalyzes reverse C-prenylation of phenalenone by direct electrophilic substitution at C6, or possibly via first a forward O-prenylation of a neighboring phenol in phenalenone, followed by a Claisen rearrangement. The hydroalkoxylation enzyme phnH catalyzes the 5-exo-trig cyclization via acid catalysis after the spontaneous deprotonation of 7-OH, which leads to the formation of the dihydrobenzofuran atrovenetin. Atrovenetin is further converted to deoxyherqueinone by the O-methyltransferase phnC which can methylate C2-OH to stabilize the northern portion of the phenalenone core. Finally, the oxidoreductase phnG converts deoxyherqueinone to herqueinone via C6 hydroxylation. The chain is Non-reducing polyketide synthase phnA from Penicillium herquei.